The sequence spans 1050 residues: Diacylglycerol kinase iota (1050 aa).

Disordered regions lie at residues 52-73 and 325-356; these read NPSS…SGSG and PQNS…ENKG. The span at 332 to 347 shows a compositional bias: basic residues; sequence SNRKKKRTSFKRKASK. The DAGKc domain maps to 367–502; that stretch reads PLMKPLLVFV…DRWNLHVERN (136 aa). ANK repeat units follow at residues 943-972 and 979-1008; these read GHCS…AELL and TGET…SLRQ. The PDZ-binding signature appears at 1048-1050; it reads TAV.

Belongs to the eukaryotic diacylglycerol kinase family. In terms of assembly, interacts (via PDZ-binding motif) with DLG4; controls the localization of DGKI to the synapse. Interacts (via PDZ-binding motif) with DLG1. Interacts (via PDZ-binding motif) with DLG2. Interacts (via PDZ-binding motif) with DLG3. May interact with RASGRP3; involved in the regulation of RASGRP3 activity. Specifically expressed in brain (at protein level). Expressed in hippocampus, cerebellum, brain stem and spinal cord (at protein level). Highly expressed in hippocampus, cerebellar cortex, olfactory bulb, and olfactory tubercle and to lower extent in the cerebral cortex, caudate putamen, and thalamus. Not detected in the white matter. Also expressed in eye. In terms of tissue distribution, major isoform in brain (at protein level). As to expression, minor isoform in brain (at protein level). Expressed in brain (at protein level).

The protein resides in the cell projection. The protein localises to the axon. It is found in the dendrite. Its subcellular location is the presynapse. It localises to the postsynapse. The protein resides in the postsynaptic density. The protein localises to the synaptic cell membrane. It is found in the cytoplasmic vesicle. Its subcellular location is the secretory vesicle. It localises to the synaptic vesicle membrane. The protein resides in the cytoplasm. The protein localises to the cytosol. It is found in the nucleus. The catalysed reaction is a 1,2-diacyl-sn-glycerol + ATP = a 1,2-diacyl-sn-glycero-3-phosphate + ADP + H(+). It catalyses the reaction 1,2-di-(9Z-octadecenoyl)-sn-glycerol + ATP = 1,2-di-(9Z-octadecenoyl)-sn-glycero-3-phosphate + ADP + H(+). The enzyme catalyses 1-octadecanoyl-2-(9Z,12Z)-octadecadienoyl-sn-glycerol + ATP = 1-octadecanoyl-2-(9Z,12Z-octadecadienoyl)-sn-glycero-3-phosphate + ADP + H(+). It carries out the reaction 1-octadecanoyl-2-(5Z,8Z,11Z,14Z-eicosatetraenoyl)-sn-glycerol + ATP = 1-octadecanoyl-2-(5Z,8Z,11Z,14Z-eicosatetraenoyl)-sn-glycero-3-phosphate + ADP + H(+). Its pathway is lipid metabolism; glycerolipid metabolism. Its activity is regulated as follows. Activated by phosphatidylserine. Diacylglycerol kinase that converts diacylglycerol/DAG into phosphatidic acid/phosphatidate/PA and regulates the respective levels of these two bioactive lipids. Thereby, acts as a central switch between the signaling pathways activated by these second messengers with different cellular targets and opposite effects in numerous biological processes. Has probably no preference for any of the diacylglycerols in terms of the acyl chain composition, especially for the acyl chain at the sn-2 position. By controlling the diacylglycerol/DAG-mediated activation of RASGRP3, negatively regulates the Rap1 signaling pathway. May play a role in presynaptic diacylglycerol/DAG signaling and control neurotransmitter release during metabotropic glutamate receptor-dependent long-term depression. In terms of biological role, has a decreased affinity for ATP and a reduced diacylglycerol kinase activity. Has no preference for any of the diacylglycerols in terms of the acyl chain composition. Its function is as follows. Has no diacylglycerol kinase activity. In Rattus norvegicus (Rat), this protein is Diacylglycerol kinase iota.